Consider the following 460-residue polypeptide: Cell death abnormality protein 8 (460 aa).

The Cytoplasmic portion of the chain corresponds to 1-45; that stretch reads MYLKKHESKLLLIPKNEDKEDAGIIAVLTDRVPSVLIVRWFDLFC. Residues 46-66 traverse the membrane as a helical segment; that stretch reads FGFAMCSYVLDFFSDIGIAIF. The Extracellular portion of the chain corresponds to 67–77; the sequence is HFWAGRHLSGA. A helical membrane pass occupies residues 78–98; it reads LVLTFALIPSVIINIISMVWM. The Cytoplasmic segment spans residues 99–123; it reads LDDEMHWKRRAHPRRTGTFELNQKR. Residues 124–144 form a helical membrane-spanning segment; that stretch reads FISLGKMITLCIFQMGPLFWY. Residues 145-219 are Extracellular-facing; it reads YKALYYGWMF…YYISGKYPYW (75 aa). A helical membrane pass occupies residues 220-240; the sequence is LYFQAASLTLSIISISWSVVV. Topologically, residues 241-274 are cytoplasmic; the sequence is QNRSLRMTRDDKVNIWPHEAVLQFCWRFLTILAR. The chain crosses the membrane as a helical span at residues 275–295; the sequence is IITLVAFVLLFGIYVVFLIFG. Over 296–320 the chain is Extracellular; sequence HLIVTLVHVIFLQALHIEACTHIEK. A helical transmembrane segment spans residues 321–341; that stretch reads LLLLINAMIHLFTPFNMAEGN. The Cytoplasmic segment spans residues 342–353; it reads TRYRYLVAYTVE. A helical membrane pass occupies residues 354–374; the sequence is FIEMMIIFLLLPTPLDAFPLI. The Extracellular segment spans residues 375-378; that stretch reads EKIR. Residues 379 to 399 form a helical membrane-spanning segment; it reads IGVPATFFIGIFIMLIYYKFF. Topologically, residues 400 to 460 are cytoplasmic; that stretch reads HPNRRQDLEA…SLLEEDECHN (61 aa).

The protein belongs to the XK family. In terms of processing, cleavage by ced-3 activates ced-8 function in promoting phosphatidylserine exposure at the surface of apoptotic cells.

It is found in the cell membrane. In terms of biological role, acts downstream of ced-9 and caspase ced-3 to promote phosphatidylserine exposure on apoptotic cell surface, possibly by mediating phospholipid scrambling. Phosphatidylserine is a specific marker only present at the surface of apoptotic cells and acts as a specific signal for engulfment. Regulates apoptosis kinetics during embryonic development. Not required for engulfment of germ cell corpses. This is Cell death abnormality protein 8 from Caenorhabditis briggsae.